Consider the following 399-residue polypeptide: CCA-adding enzyme (399 aa).

2 residues coordinate ATP: G32 and R35. Residues G32 and R35 each contribute to the CTP site. Mg(2+) contacts are provided by D45 and D47. ATP-binding residues include R116, D159, R162, R165, and R168. 5 residues coordinate CTP: R116, D159, R162, R165, and R168.

This sequence belongs to the tRNA nucleotidyltransferase/poly(A) polymerase family. Bacterial CCA-adding enzyme type 3 subfamily. In terms of assembly, homodimer. Mg(2+) is required as a cofactor.

It carries out the reaction a tRNA precursor + 2 CTP + ATP = a tRNA with a 3' CCA end + 3 diphosphate. The enzyme catalyses a tRNA with a 3' CCA end + 2 CTP + ATP = a tRNA with a 3' CCACCA end + 3 diphosphate. Functionally, catalyzes the addition and repair of the essential 3'-terminal CCA sequence in tRNAs without using a nucleic acid template. Adds these three nucleotides in the order of C, C, and A to the tRNA nucleotide-73, using CTP and ATP as substrates and producing inorganic pyrophosphate. tRNA 3'-terminal CCA addition is required both for tRNA processing and repair. Also involved in tRNA surveillance by mediating tandem CCA addition to generate a CCACCA at the 3' terminus of unstable tRNAs. While stable tRNAs receive only 3'-terminal CCA, unstable tRNAs are marked with CCACCA and rapidly degraded. In Streptococcus pneumoniae serotype 19F (strain G54), this protein is CCA-adding enzyme.